A 373-amino-acid chain; its full sequence is MATSASSHLNKGIKQVYMALPQGDKVQAMYIWIDGTGEGLRCKTRTLDSEPKCIEELPEWNFDGSSTFQSEGSNSDMYLVPAAMFRDPFRKDPNKLVFCEVFKYNRKPAETNLRHTCKRIMDMVSNQRPWFGMEQEYTLMGTDGHPFGWPSNGFPGPQGPYYCGVGADKAYGRDIVEAHYRACLYAGIKIGGTNAEVMPAQWEFQIGPCEGIDMGDHLWVARFILHRVCEDFGVIATFDPKPIPGNWNGAGCHTNFSTKAMREENGLKYIEEAIEKLSKRHQYHIRAYDPKGGLDNARRLTGFHETSNINDFSAGVANRGASIRIPRTVGQEKKGYFEDRRPSANCDPFAVTEALIRTCLLNETGDEPFQYKN.

The residue at position 2 (A2) is an N-acetylalanine. The segment at A2–K25 is required for glutamine-induced ubiquitination by CRL4(CRBN) and proteasomal degradation. An N6-acetyllysine mark is found at K11 and K14. The GS beta-grasp domain occupies V26–R106. Residue Y104 is modified to Phosphotyrosine. The GS catalytic domain maps to L113–N373. Position 134 (E134) interacts with ATP. Residues E134, E136, E196, and E203 each coordinate Mn(2+). E203–P208 contacts ATP. An L-glutamate-binding site is contributed by N246 to W247. H253 contacts Mn(2+). ATP is bound by residues N255–S257, R319, and R324. R319 contributes to the L-glutamate binding site. Y336–E338 is an ADP binding site. Position 338 (E338) interacts with Mn(2+). R340 provides a ligand contact to L-glutamate. A Phosphoserine modification is found at S343.

This sequence belongs to the glutamine synthetase family. In terms of assembly, decamer; composed of two pentamers. Interacts with PALMD. Interacts with RHOJ. Interacts with BEST2; this interaction tethers a fraction of GLUL to the membrane, causing a decrease of cytosolic glutamine synthase (GS) activity and inhibits the chloride channel activity of BEST2 by affecting the gating at the aperture in the absence of intracellular glutamate. It depends on Mg(2+) as a cofactor. The cofactor is Mn(2+). Palmitoylated; undergoes autopalmitoylation. In terms of processing, acetylated by EP300/p300; acetylation is stimulated by increased glutamine levels and promotes ubiquitin-mediated proteasomal degradation. Post-translationally, ubiquitinated by ZNRF1. Ubiquitinated by the DCX (DDB1-CUL4-X-box) E3 ubiquitin-protein ligase complex called CRL4(CRBN), leading to proteasomal degradation.

It is found in the cytoplasm. The protein localises to the cytosol. Its subcellular location is the microsome. The protein resides in the mitochondrion. It localises to the cell membrane. The catalysed reaction is L-glutamate + NH4(+) + ATP = L-glutamine + ADP + phosphate + H(+). It catalyses the reaction L-cysteinyl-[protein] + hexadecanoyl-CoA = S-hexadecanoyl-L-cysteinyl-[protein] + CoA. Its activity is regulated as follows. Glutamine synthetase activity is inhibited by methionine sulfoximine (MSO). Glutamine synthetase that catalyzes the ATP-dependent conversion of glutamate and ammonia to glutamine. Its role depends on tissue localization: in the brain, it regulates the levels of toxic ammonia and converts neurotoxic glutamate to harmless glutamine, whereas in the liver, it is one of the enzymes responsible for the removal of ammonia. Plays a key role in ammonium detoxification during erythropoiesis: the glutamine synthetase activity is required to remove ammonium generated by porphobilinogen deaminase (HMBS) during heme biosynthesis to prevent ammonium accumulation and oxidative stress. Essential for proliferation of fetal skin fibroblasts. Independently of its glutamine synthetase activity, required for endothelial cell migration during vascular development. Involved in angiogenesis by regulating membrane localization and activation of the GTPase RHOJ, possibly by promoting RHOJ palmitoylation. May act as a palmitoyltransferase for RHOJ: able to autopalmitoylate and then transfer the palmitoyl group to RHOJ. Plays a role in ribosomal 40S subunit biogenesis. Through the interaction with BEST2, inhibits BEST2 channel activity by affecting the gating at the aperture in the absence of intracellular L-glutamate, but sensitizes BEST2 to intracellular L-glutamate, which promotes the opening of BEST2 and thus relieves its inhibitory effect on BEST2. In Bos taurus (Bovine), this protein is Glutamine synthetase.